Reading from the N-terminus, the 176-residue chain is ATP-dependent protease subunit HslV (176 aa).

T5 is a catalytic residue. Na(+)-binding residues include G161, C164, and T167.

Belongs to the peptidase T1B family. HslV subfamily. As to quaternary structure, a double ring-shaped homohexamer of HslV is capped on each side by a ring-shaped HslU homohexamer. The assembly of the HslU/HslV complex is dependent on binding of ATP.

The protein resides in the cytoplasm. The enzyme catalyses ATP-dependent cleavage of peptide bonds with broad specificity.. With respect to regulation, allosterically activated by HslU binding. In terms of biological role, protease subunit of a proteasome-like degradation complex believed to be a general protein degrading machinery. This chain is ATP-dependent protease subunit HslV, found in Wolinella succinogenes (strain ATCC 29543 / DSM 1740 / CCUG 13145 / JCM 31913 / LMG 7466 / NCTC 11488 / FDC 602W) (Vibrio succinogenes).